The chain runs to 527 residues: Phosphoenolpyruvate carboxykinase (ATP) (527 aa).

Substrate-binding residues include Arg56, Tyr192, and Lys198. ATP-binding positions include Lys198, His217, and Gly233–Thr241. Mn(2+) is bound by residues Lys198 and His217. Residue Asp254 coordinates Mn(2+). Positions 282, 319, and 444 each coordinate ATP. Arg319 is a binding site for substrate.

The protein belongs to the phosphoenolpyruvate carboxykinase (ATP) family. It depends on Mn(2+) as a cofactor.

It localises to the cytoplasm. The enzyme catalyses oxaloacetate + ATP = phosphoenolpyruvate + ADP + CO2. Its pathway is carbohydrate biosynthesis; gluconeogenesis. Functionally, involved in the gluconeogenesis. Catalyzes the conversion of oxaloacetate (OAA) to phosphoenolpyruvate (PEP) through direct phosphoryl transfer between the nucleoside triphosphate and OAA. In Bacillus velezensis (strain DSM 23117 / BGSC 10A6 / LMG 26770 / FZB42) (Bacillus amyloliquefaciens subsp. plantarum), this protein is Phosphoenolpyruvate carboxykinase (ATP).